A 319-amino-acid chain; its full sequence is Tyrosine phosphatase-like protein N3 (319 aa).

The region spanning Ser7 to Ser285 is the Tyrosine-protein phosphatase domain.

Belongs to the protein-tyrosine phosphatase family.

The chain is Tyrosine phosphatase-like protein N3 (N7) from Microplitis demolitor bracovirus (isolate Webb) (MdBV).